A 496-amino-acid chain; its full sequence is Maturase K (496 aa).

This sequence belongs to the intron maturase 2 family. MatK subfamily.

It is found in the plastid. Its subcellular location is the chloroplast. Its function is as follows. Usually encoded in the trnK tRNA gene intron. Probably assists in splicing its own and other chloroplast group II introns. The protein is Maturase K of Paeonia suffruticosa (Tree peony).